Reading from the N-terminus, the 171-residue chain is Shikimate kinase (171 aa).

14–19 contacts ATP; sequence GAGKST. Ser18 is a Mg(2+) binding site. The substrate site is built by Asp36, Arg60, and Gly82. Arg120 contacts ATP. Arg139 contacts substrate. ATP is bound at residue Gln156.

It belongs to the shikimate kinase family. Monomer. Requires Mg(2+) as cofactor.

It is found in the cytoplasm. The enzyme catalyses shikimate + ATP = 3-phosphoshikimate + ADP + H(+). It functions in the pathway metabolic intermediate biosynthesis; chorismate biosynthesis; chorismate from D-erythrose 4-phosphate and phosphoenolpyruvate: step 5/7. In terms of biological role, catalyzes the specific phosphorylation of the 3-hydroxyl group of shikimic acid using ATP as a cosubstrate. In Shewanella loihica (strain ATCC BAA-1088 / PV-4), this protein is Shikimate kinase.